The chain runs to 328 residues: Homeobox protein Hox-C13 (328 aa).

The disordered stretch occupies residues 23–48 (AAESGSGGGGGGGGAGGAGGGCSGAS). Positions 27 to 45 (GSGGGGGGGGAGGAGGGCS) are enriched in gly residues. The segment at residues 258–317 (GRKKRVPYTKVQLKELEKEYAASKFITKEKRRRISATTNLSERQVTIWFQNRRVKEKKVV) is a DNA-binding region (homeobox).

The protein belongs to the Abd-B homeobox family. In terms of tissue distribution, expressed in differentiating keratinocytes. In the hair follicle lower matrix, expressed in all 3 hair shaft-forming compartments, i.e. cuticle, cortex and medulla. Expression stops sharply at the boundary with the germinal matrix compartment.

The protein resides in the nucleus. Transcription factor which plays a role in hair follicle differentiation. Regulates FOXQ1 expression and that of other hair-specific genes. The sequence is that of Homeobox protein Hox-C13 (Hoxc13) from Mus musculus (Mouse).